Consider the following 256-residue polypeptide: Large ribosomal subunit protein bL21c (256 aa).

Residues 1-55 (MASATLAFSCSSLCATLKLPQNLNPLLLNVPPLSKPFSGVVSPPSLSRLSLLPVA) constitute a chloroplast transit peptide.

In terms of assembly, component of the chloroplast large ribosomal subunit (LSU). Mature 70S chloroplast ribosomes of higher plants consist of a small (30S) and a large (50S) subunit. The 30S small subunit contains 1 molecule of ribosomal RNA (16S rRNA) and 24 different proteins. The 50S large subunit contains 3 rRNA molecules (23S, 5S and 4.5S rRNA) and 33 different proteins.

Its subcellular location is the plastid. It localises to the chloroplast. Its function is as follows. Component of the chloroplast ribosome (chloro-ribosome), a dedicated translation machinery responsible for the synthesis of chloroplast genome-encoded proteins, including proteins of the transcription and translation machinery and components of the photosynthetic apparatus. This is Large ribosomal subunit protein bL21c (RPL21) from Spinacia oleracea (Spinach).